The sequence spans 127 residues: MAQSVPPGDIQTQPGTKIVFNAPYDDKHTYHIKVINSSARRIGYGIKTTNMKRLGVDPPCGVLDPKEAVFLAVSCDAFAFGQEDTNNDRITVEWTNTPDGAAKQFRREWFQGDGMVRRKNLPIEYNP.

A2 carries the post-translational modification N-acetylalanine. In terms of domain architecture, MSP spans D9 to N126.

In terms of tissue distribution, sperm.

It localises to the cell projection. Its subcellular location is the pseudopodium. The protein localises to the cytoplasm. It is found in the cytoskeleton. In terms of biological role, central component in molecular interactions underlying sperm crawling. Forms an extensive filament system that extends from sperm villipoda, along the leading edge of the pseudopod. This is Major sperm protein 33 (msp-33) from Caenorhabditis elegans.